The chain runs to 326 residues: 4-hydroxythreonine-4-phosphate dehydrogenase (326 aa).

The substrate site is built by His-133 and Thr-134. A divalent metal cation contacts are provided by His-163, His-208, and His-263. Residues Lys-271, Asn-280, and Arg-289 each contribute to the substrate site.

This sequence belongs to the PdxA family. Homodimer. The cofactor is Zn(2+). Mg(2+) is required as a cofactor. It depends on Co(2+) as a cofactor.

The protein localises to the cytoplasm. The catalysed reaction is 4-(phosphooxy)-L-threonine + NAD(+) = 3-amino-2-oxopropyl phosphate + CO2 + NADH. It participates in cofactor biosynthesis; pyridoxine 5'-phosphate biosynthesis; pyridoxine 5'-phosphate from D-erythrose 4-phosphate: step 4/5. Catalyzes the NAD(P)-dependent oxidation of 4-(phosphooxy)-L-threonine (HTP) into 2-amino-3-oxo-4-(phosphooxy)butyric acid which spontaneously decarboxylates to form 3-amino-2-oxopropyl phosphate (AHAP). This is 4-hydroxythreonine-4-phosphate dehydrogenase from Pseudoalteromonas atlantica (strain T6c / ATCC BAA-1087).